Reading from the N-terminus, the 141-residue chain is Protein C19orf12 homolog (141 aa).

A helical transmembrane segment spans residues 37–57 (GLAFAGGLIGGPLGIAVGGAV).

It belongs to the C19orf12 family.

Its subcellular location is the mitochondrion. The protein localises to the mitochondrion membrane. It is found in the endoplasmic reticulum. It localises to the cytoplasm. The protein resides in the cytosol. This chain is Protein C19orf12 homolog, found in Danio rerio (Zebrafish).